The chain runs to 158 residues: Transcriptional regulator MraZ (158 aa).

SpoVT-AbrB domains follow at residues 5–50 and 91–134; these read IYET…GGVY and AVEC…SQSE.

It belongs to the MraZ family. In terms of assembly, forms oligomers.

The protein resides in the cytoplasm. Its subcellular location is the nucleoid. In Geobacter metallireducens (strain ATCC 53774 / DSM 7210 / GS-15), this protein is Transcriptional regulator MraZ.